Here is a 522-residue protein sequence, read N- to C-terminus: Na(+)/H(+) antiporter NhaB (522 aa).

11 helical membrane passes run 25–45, 49–69, 87–107, 128–162, 201–221, 237–257, 302–322, 356–376, 388–408, 446–466, and 476–496; these read VFLV…GWLL, FIFT…GMLA, ILAN…IYFM, LSLA…FYGV, LMMH…VGEP, FFFR…VTCI, VFVG…VGLI, LVVF…APVI, LLLF…VFVA, ATPN…SPLI, and MALP…EYVL.

Belongs to the NhaB Na(+)/H(+) (TC 2.A.34) antiporter family.

It is found in the cell inner membrane. It carries out the reaction 2 Na(+)(in) + 3 H(+)(out) = 2 Na(+)(out) + 3 H(+)(in). Functionally, na(+)/H(+) antiporter that extrudes sodium in exchange for external protons. This is Na(+)/H(+) antiporter NhaB from Actinobacillus succinogenes (strain ATCC 55618 / DSM 22257 / CCUG 43843 / 130Z).